The following is a 556-amino-acid chain: Myb/SANT-like DNA-binding domain-containing protein 2 (556 aa).

Composition is skewed to polar residues over residues 1–10 (MAASCGSSQL) and 36–45 (GNPSLSDPST). Residues 1–82 (MAASCGSSQL…GGASPSVSFS (82 aa)) form a disordered region. Residues 56 to 74 (PAAGGAGLGGGGAAGGRGG) are compositionally biased toward gly residues. Residues 99–169 (SWTPAETNAL…QCRERIKTLR (71 aa)) form the Myb-like domain. Positions 431 to 458 (PRSPLAEPRGADPSNETPGELEVPSPQA) are disordered.

In Gallus gallus (Chicken), this protein is Myb/SANT-like DNA-binding domain-containing protein 2 (MSANTD2).